Here is a 393-residue protein sequence, read N- to C-terminus: Xyloside xylosyltransferase 1 (393 aa).

Residues 1–23 (MGLLRGGLPCARAMARLGAVRSH) are Cytoplasmic-facing. A helical; Signal-anchor for type II membrane protein transmembrane segment spans residues 24 to 44 (YCALLLAAALAVCAFYYLGSG). The Lumenal segment spans residues 45 to 393 (RETFSSATKR…GNCNTPIPED (349 aa)). Position 104–106 (104–106 (MFT)) interacts with UDP-alpha-D-xylose. Residue aspartate 226 coordinates Mn(2+). Leucine 227 provides a ligand contact to UDP-alpha-D-xylose. Aspartate 228 is a Mn(2+) binding site. The interaction with target proteins stretch occupies residues 263 to 266 (HTFW). Positions 290, 328, and 331 each coordinate UDP-alpha-D-xylose. 2 residues coordinate a glycoprotein: glutamine 331 and tryptophan 360. 2 cysteine pairs are disulfide-bonded: cysteine 350-cysteine 375 and cysteine 357-cysteine 386. A Mn(2+)-binding site is contributed by histidine 383. Asparagine 385 lines the a glycoprotein pocket.

Belongs to the glycosyltransferase 8 family. Homodimer. Dimer formation may be essential for the retention in endoplasmic reticulum. Requires Mg(2+) as cofactor. It depends on Mn(2+) as a cofactor.

The protein resides in the endoplasmic reticulum membrane. The catalysed reaction is 3-O-[alpha-D-xylosyl-(1-&gt;3)-beta-D-glucosyl]-L-seryl-[EGF-like domain protein] + UDP-alpha-D-xylose = 3-O-[alpha-D-xylosyl-(1-&gt;3)-alpha-D-xylosyl-(1-&gt;3)-beta-D-glucosyl]-L-seryl-[EGF-like domain protein] + UDP + H(+). Its function is as follows. Alpha-1,3-xylosyltransferase, which elongates the O-linked xylose-glucose disaccharide attached to EGF-like repeats in the extracellular domain of target proteins by catalyzing the addition of the second xylose. Known targets include Notch proteins and coagulation factors, such as F9. The sequence is that of Xyloside xylosyltransferase 1 (XXYLT1) from Homo sapiens (Human).